A 111-amino-acid polypeptide reads, in one-letter code: MMKGGMAGLMKQAQQMQEKMQKMQEELANAEVTGQSGGGLVSVVMTGRHDVKRVSIDQSLMSTDEDDKEVLEDLIAAALNDAVRKVEQSSQEKMGGMTAGMQLPPGFKMPF.

Disordered stretches follow at residues 1-25 (MMKGGMAGLMKQAQQMQEKMQKMQE) and 87-111 (EQSSQEKMGGMTAGMQLPPGFKMPF).

This sequence belongs to the YbaB/EbfC family. In terms of assembly, homodimer.

The protein localises to the cytoplasm. The protein resides in the nucleoid. Functionally, binds to DNA and alters its conformation. May be involved in regulation of gene expression, nucleoid organization and DNA protection. This Pseudomonas putida (strain GB-1) protein is Nucleoid-associated protein PputGB1_3833.